The chain runs to 143 residues: Peptide methionine sulfoxide reductase B8 (143 aa).

One can recognise a MsrB domain in the interval 18–139 (DEEWRAVLSP…NSVSLKFASA (122 aa)). The Zn(2+) site is built by Cys57, Cys60, Cys103, and Cys106. Residues Cys75 and Cys128 are joined by a disulfide bond. The Nucleophile role is filled by Cys128.

The protein belongs to the MsrB Met sulfoxide reductase family. Requires Zn(2+) as cofactor.

It is found in the cytoplasm. Its subcellular location is the cytosol. It carries out the reaction L-methionyl-[protein] + [thioredoxin]-disulfide + H2O = L-methionyl-(R)-S-oxide-[protein] + [thioredoxin]-dithiol. Catalyzes the reduction of methionine sulfoxide (MetSO) to methionine in proteins. Plays a protective role against oxidative stress by restoring activity to proteins that have been inactivated by methionine oxidation. MSRB family specifically reduces the MetSO R-enantiomer. This Arabidopsis thaliana (Mouse-ear cress) protein is Peptide methionine sulfoxide reductase B8 (MSRB8).